Reading from the N-terminus, the 490-residue chain is Argininosuccinate lyase (490 aa).

Disordered stretches follow at residues 426 to 452 (DPES…LSAA) and 469 to 490 (ALAT…TAPE). Over residues 440–452 (PAPESMAAALSAA) the composition is skewed to low complexity. Residues 469–480 (ALATAADERERV) show a composition bias toward basic and acidic residues.

The protein belongs to the lyase 1 family. Argininosuccinate lyase subfamily.

Its subcellular location is the cytoplasm. It carries out the reaction 2-(N(omega)-L-arginino)succinate = fumarate + L-arginine. It functions in the pathway amino-acid biosynthesis; L-arginine biosynthesis; L-arginine from L-ornithine and carbamoyl phosphate: step 3/3. This is Argininosuccinate lyase from Natronomonas pharaonis (strain ATCC 35678 / DSM 2160 / CIP 103997 / JCM 8858 / NBRC 14720 / NCIMB 2260 / Gabara) (Halobacterium pharaonis).